Here is a 453-residue protein sequence, read N- to C-terminus: Ribosomal protein uS12 methylthiotransferase RimO (453 aa).

The 116-residue stretch at 9–124 (PKVGFVSLGC…VMEAVHTHLP (116 aa)) folds into the MTTase N-terminal domain. The [4Fe-4S] cluster site is built by Cys18, Cys54, Cys83, Cys155, Cys159, and Cys162. The 242-residue stretch at 141 to 382 (LTPKHYAYLK…MEVAERVSAR (242 aa)) folds into the Radical SAM core domain. Positions 385–453 (QRKVGKTLRV…ADGHDLWGEV (69 aa)) constitute a TRAM domain.

The protein belongs to the methylthiotransferase family. RimO subfamily. Requires [4Fe-4S] cluster as cofactor.

Its subcellular location is the cytoplasm. The catalysed reaction is L-aspartate(89)-[ribosomal protein uS12]-hydrogen + (sulfur carrier)-SH + AH2 + 2 S-adenosyl-L-methionine = 3-methylsulfanyl-L-aspartate(89)-[ribosomal protein uS12]-hydrogen + (sulfur carrier)-H + 5'-deoxyadenosine + L-methionine + A + S-adenosyl-L-homocysteine + 2 H(+). In terms of biological role, catalyzes the methylthiolation of an aspartic acid residue of ribosomal protein uS12. This Ralstonia nicotianae (strain ATCC BAA-1114 / GMI1000) (Ralstonia solanacearum) protein is Ribosomal protein uS12 methylthiotransferase RimO.